We begin with the raw amino-acid sequence, 324 residues long: D-alanine--D-alanine ligase (324 aa).

The region spanning 116–311 (KQVWHTLGIP…FQQLVLAILA (196 aa)) is the ATP-grasp domain. Residue 142-197 (ATELGFPLIVKPAHEGSSIGMAKVSSASELIDAWKAASTYDSQVLVEQWIHGPEFT) participates in ATP binding. The Mg(2+) site is built by Asp265, Glu278, and Asn280.

This sequence belongs to the D-alanine--D-alanine ligase family. It depends on Mg(2+) as a cofactor. Requires Mn(2+) as cofactor.

Its subcellular location is the cytoplasm. It carries out the reaction 2 D-alanine + ATP = D-alanyl-D-alanine + ADP + phosphate + H(+). It functions in the pathway cell wall biogenesis; peptidoglycan biosynthesis. Its function is as follows. Cell wall formation. The sequence is that of D-alanine--D-alanine ligase from Pseudomonas fluorescens (strain Pf0-1).